A 211-amino-acid chain; its full sequence is Dephospho-CoA kinase (211 aa).

The DPCK domain occupies 2 to 204; the sequence is IIGLTGSIGM…SGVRRWRRGK (203 aa). An ATP-binding site is contributed by 10–15; sequence GMGKST.

The protein belongs to the CoaE family.

The protein resides in the cytoplasm. The enzyme catalyses 3'-dephospho-CoA + ATP = ADP + CoA + H(+). It functions in the pathway cofactor biosynthesis; coenzyme A biosynthesis; CoA from (R)-pantothenate: step 5/5. Functionally, catalyzes the phosphorylation of the 3'-hydroxyl group of dephosphocoenzyme A to form coenzyme A. The polypeptide is Dephospho-CoA kinase (Rhodospirillum rubrum (strain ATCC 11170 / ATH 1.1.1 / DSM 467 / LMG 4362 / NCIMB 8255 / S1)).